We begin with the raw amino-acid sequence, 337 residues long: Biotin synthase (337 aa).

The 229-residue stretch at 39 to 267 (QEVQVCTLLS…KAMVRLSAGR (229 aa)) folds into the Radical SAM core domain. Residues Cys54, Cys58, and Cys61 each coordinate [4Fe-4S] cluster. 4 residues coordinate [2Fe-2S] cluster: Cys98, Cys130, Cys190, and Arg262.

It belongs to the radical SAM superfamily. Biotin synthase family. Homodimer. It depends on [4Fe-4S] cluster as a cofactor. [2Fe-2S] cluster serves as cofactor.

The enzyme catalyses (4R,5S)-dethiobiotin + (sulfur carrier)-SH + 2 reduced [2Fe-2S]-[ferredoxin] + 2 S-adenosyl-L-methionine = (sulfur carrier)-H + biotin + 2 5'-deoxyadenosine + 2 L-methionine + 2 oxidized [2Fe-2S]-[ferredoxin]. It participates in cofactor biosynthesis; biotin biosynthesis; biotin from 7,8-diaminononanoate: step 2/2. Its function is as follows. Catalyzes the conversion of dethiobiotin (DTB) to biotin by the insertion of a sulfur atom into dethiobiotin via a radical-based mechanism. In Cytophaga hutchinsonii (strain ATCC 33406 / DSM 1761 / CIP 103989 / NBRC 15051 / NCIMB 9469 / D465), this protein is Biotin synthase.